Consider the following 200-residue polypeptide: NAD(P)H-dependent FMN reductase C4B3.06c (200 aa).

Residues Arg22, 96-99, and Tyr126 each bind FMN; that span reads QYNG.

As to quaternary structure, homodimer.

The protein localises to the cytoplasm. Its subcellular location is the nucleus. The enzyme catalyses FMNH2 + NADP(+) = FMN + NADPH + 2 H(+). It carries out the reaction FMNH2 + NAD(+) = FMN + NADH + 2 H(+). In terms of biological role, has several reductase activities that are NAD(P)H-dependent and involve FMN as a cofactor. May be involved in ferric iron assimilation. This is NAD(P)H-dependent FMN reductase C4B3.06c from Schizosaccharomyces pombe (strain 972 / ATCC 24843) (Fission yeast).